The following is a 309-amino-acid chain: MILENLFKNLIYDPVSVLGLLVFYILLVNLPISLGAFFQKKSFFIVRVLTILINFLITLQLLFRWSISGHFPISNLYESLYFLTWGITMGQLLIEREYQSPIIPSIAIPIELLTVAFACFVLPDDLKISSNLVPALRSSWLVMHVSVVMLSYAALIIGSLLSASVLFINKNKPLQIRSSSTGIGGFKISNNYPLNELVEPIEFSHSEELDTLSYRSILIGFVLLTLGLISGAVWANEAWGTWWSWDPKETWAFISWMFYAAYLHMRISKGWQGRRPALLATTGFLVVLICYLGVNFLGIGLHSYGWIFG.

8 helical membrane-spanning segments follow: residues 18–38 (LGLL…GAFF), 43–63 (FFIV…QLLF), 67–87 (ISGH…TWGI), 102–122 (IIPS…CFVL), 148–168 (VMLS…VLFI), 216–236 (SILI…VWAN), 250–267 (TWAF…HMRI), and 279–299 (LATT…FLGI).

The protein belongs to the CcmF/CycK/Ccl1/NrfE/CcsA family. May interact with ccs1.

It localises to the cellular thylakoid membrane. Required during biogenesis of c-type cytochromes (cytochrome c6 and cytochrome f) at the step of heme attachment. This chain is Cytochrome c biogenesis protein CcsA, found in Prochlorococcus marinus (strain MIT 9215).